The sequence spans 245 residues: 1-(5-phosphoribosyl)-5-[(5-phosphoribosylamino)methylideneamino] imidazole-4-carboxamide isomerase (245 aa).

D7 functions as the Proton acceptor in the catalytic mechanism. Catalysis depends on D129, which acts as the Proton donor.

This sequence belongs to the HisA/HisF family.

Its subcellular location is the cytoplasm. The enzyme catalyses 1-(5-phospho-beta-D-ribosyl)-5-[(5-phospho-beta-D-ribosylamino)methylideneamino]imidazole-4-carboxamide = 5-[(5-phospho-1-deoxy-D-ribulos-1-ylimino)methylamino]-1-(5-phospho-beta-D-ribosyl)imidazole-4-carboxamide. It functions in the pathway amino-acid biosynthesis; L-histidine biosynthesis; L-histidine from 5-phospho-alpha-D-ribose 1-diphosphate: step 4/9. The chain is 1-(5-phosphoribosyl)-5-[(5-phosphoribosylamino)methylideneamino] imidazole-4-carboxamide isomerase from Pectobacterium atrosepticum (strain SCRI 1043 / ATCC BAA-672) (Erwinia carotovora subsp. atroseptica).